Here is a 64-residue protein sequence, read N- to C-terminus: Large ribosomal subunit protein bL32 (64 aa).

Belongs to the bacterial ribosomal protein bL32 family.

This Bifidobacterium longum (strain DJO10A) protein is Large ribosomal subunit protein bL32.